The primary structure comprises 117 residues: uncharacterized protein (117 aa).

2 consecutive transmembrane segments (helical) span residues 9–29 and 56–76; these read ITSHDNFIAYIFFTFFTFIPF and VIIVGPLAPFSSYSSPFFFIP.

The protein localises to the membrane. This is an uncharacterized protein from Saccharomyces cerevisiae (strain ATCC 204508 / S288c) (Baker's yeast).